A 307-amino-acid polypeptide reads, in one-letter code: Holliday junction branch migration complex subunit RuvB (307 aa).

The segment at 1 to 167 (MKLQIKPPNT…FGVILNINYY (167 aa)) is large ATPase domain (RuvB-L). Positions 5, 48, 51, 52, 53, 157, 167, and 204 each coordinate ATP. A Mg(2+)-binding site is contributed by Thr-52. The tract at residues 168–233 (SNAEIEKMVS…DLEGLFKNLM (66 aa)) is small ATPAse domain (RuvB-S). Residues 236–307 (KNGLQSIDVQ…NSGREYLVNF (72 aa)) are head domain (RuvB-H). Residues Arg-270, Lys-289, and Arg-294 each contribute to the DNA site.

Belongs to the RuvB family. In terms of assembly, homohexamer. Forms an RuvA(8)-RuvB(12)-Holliday junction (HJ) complex. HJ DNA is sandwiched between 2 RuvA tetramers; dsDNA enters through RuvA and exits via RuvB. An RuvB hexamer assembles on each DNA strand where it exits the tetramer. Each RuvB hexamer is contacted by two RuvA subunits (via domain III) on 2 adjacent RuvB subunits; this complex drives branch migration. In the full resolvosome a probable DNA-RuvA(4)-RuvB(12)-RuvC(2) complex forms which resolves the HJ.

Its subcellular location is the cytoplasm. It catalyses the reaction ATP + H2O = ADP + phosphate + H(+). The RuvA-RuvB-RuvC complex processes Holliday junction (HJ) DNA during genetic recombination and DNA repair, while the RuvA-RuvB complex plays an important role in the rescue of blocked DNA replication forks via replication fork reversal (RFR). RuvA specifically binds to HJ cruciform DNA, conferring on it an open structure. The RuvB hexamer acts as an ATP-dependent pump, pulling dsDNA into and through the RuvAB complex. RuvB forms 2 homohexamers on either side of HJ DNA bound by 1 or 2 RuvA tetramers; 4 subunits per hexamer contact DNA at a time. Coordinated motions by a converter formed by DNA-disengaged RuvB subunits stimulates ATP hydrolysis and nucleotide exchange. Immobilization of the converter enables RuvB to convert the ATP-contained energy into a lever motion, pulling 2 nucleotides of DNA out of the RuvA tetramer per ATP hydrolyzed, thus driving DNA branch migration. The RuvB motors rotate together with the DNA substrate, which together with the progressing nucleotide cycle form the mechanistic basis for DNA recombination by continuous HJ branch migration. Branch migration allows RuvC to scan DNA until it finds its consensus sequence, where it cleaves and resolves cruciform DNA. This chain is Holliday junction branch migration complex subunit RuvB, found in Mycoplasma genitalium (strain ATCC 33530 / DSM 19775 / NCTC 10195 / G37) (Mycoplasmoides genitalium).